The chain runs to 120 residues: uncharacterized protein (120 aa).

To phage T4 y06Q.

This is an uncharacterized protein from Escherichia coli (strain K12).